We begin with the raw amino-acid sequence, 775 residues long: Endothelin-converting enzyme-like 1 (775 aa).

Topologically, residues 1–59 are cytoplasmic; sequence MEPPYSLTAHYDEFQEVKYVSRCGAGGARGASLPPGFPLGAARSATGARSGLPRWNRRE. The chain crosses the membrane as a helical; Signal-anchor for type II membrane protein span at residues 60–82; sequence VCLLSGLVFAAGLCAILAAMLAL. Residues 83-775 are Lumenal-facing; it reads KYLGPVAAGG…MNPAHKCSVW (693 aa). The Peptidase M13 domain occupies 98 to 775; it reads GCPERKAFAR…MNPAHKCSVW (678 aa). Cystine bridges form between Cys123–Cys760, Cys131–Cys720, Cys187–Cys441, and Cys649–Cys772. N-linked (GlcNAc...) asparagine glycosylation is found at Asn255 and Asn322. His612 provides a ligand contact to Zn(2+). Residue Glu613 is part of the active site. Residue His616 coordinates Zn(2+). Residue Asn656 is glycosylated (N-linked (GlcNAc...) asparagine). Glu672 is a Zn(2+) binding site. Asp676 serves as the catalytic Proton donor.

This sequence belongs to the peptidase M13 family. The cofactor is Zn(2+). N-glycosylated. In terms of tissue distribution, highly expressed in the CNS, in particular in putamen, spinal cord, medulla and subthalamic nucleus. A strong signal was also detected in uterine subepithelial cells and around renal blood vessels. Detected at lower levels in amygdala, caudate, thalamus, pancreas and skeletal muscle. Detected at very low levels in substantia nigra, cerebellum, cortex, corpus callosum and hippocampus.

It localises to the membrane. May contribute to the degradation of peptide hormones and be involved in the inactivation of neuronal peptides. The sequence is that of Endothelin-converting enzyme-like 1 (ECEL1) from Homo sapiens (Human).